The following is a 146-amino-acid chain: NADH-quinone oxidoreductase subunit A (146 aa).

3 helical membrane-spanning segments follow: residues 16–36, 68–88, and 98–118; these read FAIF…GGWF, FYLV…LFAW, and VGFV…VYLV.

Belongs to the complex I subunit 3 family. In terms of assembly, NDH-1 is composed of 13 different subunits. Subunits NuoA, H, J, K, L, M, N constitute the membrane sector of the complex.

Its subcellular location is the cell inner membrane. It catalyses the reaction a quinone + NADH + 5 H(+)(in) = a quinol + NAD(+) + 4 H(+)(out). NDH-1 shuttles electrons from NADH, via FMN and iron-sulfur (Fe-S) centers, to quinones in the respiratory chain. The immediate electron acceptor for the enzyme in this species is believed to be ubiquinone. Couples the redox reaction to proton translocation (for every two electrons transferred, four hydrogen ions are translocated across the cytoplasmic membrane), and thus conserves the redox energy in a proton gradient. This Enterobacter sp. (strain 638) protein is NADH-quinone oxidoreductase subunit A.